The following is a 134-amino-acid chain: MAETFNFELVSPERLLVSETVTEVVIPATEGEMTVMANHAPTMTTVRPGVVAVKTAAGNTERYAVFGGFADILPTGCTLLAESAVHVDELDSTVLENRIEAARAELEGASDEKKTRLEQLVAELTKLGEIVIPA.

This sequence belongs to the ATPase epsilon chain family. In terms of assembly, F-type ATPases have 2 components, CF(1) - the catalytic core - and CF(0) - the membrane proton channel. CF(1) has five subunits: alpha(3), beta(3), gamma(1), delta(1), epsilon(1). CF(0) has three main subunits: a, b and c.

The protein resides in the cell inner membrane. Its function is as follows. Produces ATP from ADP in the presence of a proton gradient across the membrane. The polypeptide is ATP synthase epsilon chain (Sinorhizobium medicae (strain WSM419) (Ensifer medicae)).